Here is a 573-residue protein sequence, read N- to C-terminus: Membrane protein insertase YidC (573 aa).

6 helical membrane-spanning segments follow: residues 6 to 26 (VFLI…WGKD), 355 to 375 (FSIM…LHSF), 379 to 399 (WGWA…PLSA), 446 to 466 (GGCL…WVLV), 488 to 508 (PYFI…KLTP), and 524 to 544 (PLVF…YWVV).

This sequence belongs to the OXA1/ALB3/YidC family. Type 1 subfamily. In terms of assembly, interacts with the Sec translocase complex via SecD. Specifically interacts with transmembrane segments of nascent integral membrane proteins during membrane integration.

It is found in the cell inner membrane. Its function is as follows. Required for the insertion and/or proper folding and/or complex formation of integral membrane proteins into the membrane. Involved in integration of membrane proteins that insert both dependently and independently of the Sec translocase complex, as well as at least some lipoproteins. Aids folding of multispanning membrane proteins. This chain is Membrane protein insertase YidC, found in Xanthomonas campestris pv. campestris (strain ATCC 33913 / DSM 3586 / NCPPB 528 / LMG 568 / P 25).